Reading from the N-terminus, the 123-residue chain is UPF0102 protein CLK_1817 (123 aa).

Belongs to the UPF0102 family.

The sequence is that of UPF0102 protein CLK_1817 from Clostridium botulinum (strain Loch Maree / Type A3).